The sequence spans 308 residues: tRNA dimethylallyltransferase (308 aa).

Residue 9-16 (GPTAVGKT) participates in ATP binding. 11 to 16 (TAVGKT) is a binding site for substrate. Positions 34 to 37 (DSMQ) are interaction with substrate tRNA.

The protein belongs to the IPP transferase family. Monomer. Mg(2+) is required as a cofactor.

The enzyme catalyses adenosine(37) in tRNA + dimethylallyl diphosphate = N(6)-dimethylallyladenosine(37) in tRNA + diphosphate. Catalyzes the transfer of a dimethylallyl group onto the adenine at position 37 in tRNAs that read codons beginning with uridine, leading to the formation of N6-(dimethylallyl)adenosine (i(6)A). This Lactobacillus delbrueckii subsp. bulgaricus (strain ATCC BAA-365 / Lb-18) protein is tRNA dimethylallyltransferase.